A 205-amino-acid polypeptide reads, in one-letter code: Guanylate kinase (205 aa).

A Guanylate kinase-like domain is found at 3–181 (GSLYIISAPS…ALSELHSIFL (179 aa)). 10 to 17 (APSGAGKT) serves as a coordination point for ATP.

It belongs to the guanylate kinase family.

The protein localises to the cytoplasm. It catalyses the reaction GMP + ATP = GDP + ADP. In terms of biological role, essential for recycling GMP and indirectly, cGMP. The polypeptide is Guanylate kinase (Hydrogenovibrio crunogenus (strain DSM 25203 / XCL-2) (Thiomicrospira crunogena)).